The sequence spans 322 residues: Aldo-keto reductase family 1 member C13 (322 aa).

Residues 20-24 (GFGTY) and aspartate 50 each bind NAD(+). Tyrosine 55 serves as the catalytic Proton donor. Histidine 117 is a binding site for substrate. NAD(+) contacts are provided by residues 166 to 167 (SN), glutamine 190, 216 to 224 (FGALGTQRY), and 270 to 280 (QSFYESEMKEN).

It belongs to the aldo/keto reductase family. As to quaternary structure, monomer. The N-terminus is blocked.

It catalyses the reaction morphine + NAD(+) = morphinone + NADH + H(+). The catalysed reaction is morphine + NADP(+) = morphinone + NADPH + H(+). Strongly inhibited by sulfhydryl reagents and ketamine, but not by pyrazole, barbital and indomethacine. Its function is as follows. Catalyzes the dehydrogenation of morphine to morphinone. The enzyme also exhibits significant activity for a variety of cyclic and alicyclic alcohols. In addition to xenobiotics, the enzyme catalyzes the dehydrogenation of 17-beta-hydroxysteroids with much higher affinities than morphine. Uses both NAD and NADP, but the activity is much greater with NAD than with NADP. This is Aldo-keto reductase family 1 member C13 (AKR1C13) from Mesocricetus auratus (Golden hamster).